Consider the following 228-residue polypeptide: UPF0758 protein RALTA_A2508 (228 aa).

In terms of domain architecture, MPN spans 102 to 224; it reads GFDSPDSVRS…IRSLAESCER (123 aa). His173, His175, and Asp186 together coordinate Zn(2+). Residues 173–186 carry the JAMM motif motif; sequence HNHPRGTTAPSQSD.

The protein belongs to the UPF0758 family.

This Cupriavidus taiwanensis (strain DSM 17343 / BCRC 17206 / CCUG 44338 / CIP 107171 / LMG 19424 / R1) (Ralstonia taiwanensis (strain LMG 19424)) protein is UPF0758 protein RALTA_A2508.